The chain runs to 429 residues: D-amino acid dehydrogenase (429 aa).

FAD is bound at residue 3–17 (VLILGSGVIGTTTAW).

This sequence belongs to the DadA oxidoreductase family. FAD is required as a cofactor.

The enzyme catalyses a D-alpha-amino acid + A + H2O = a 2-oxocarboxylate + AH2 + NH4(+). The protein operates within amino-acid degradation; D-alanine degradation; NH(3) and pyruvate from D-alanine: step 1/1. In terms of biological role, oxidative deamination of D-amino acids. The sequence is that of D-amino acid dehydrogenase from Xanthomonas campestris pv. campestris (strain B100).